A 122-amino-acid polypeptide reads, in one-letter code: Biogenesis of lysosome-related organelles complex 1 subunit CNL1 (122 aa).

The segment covering 1–10 (MQDNSSHSRE) has biased composition (basic and acidic residues). Residues 1–21 (MQDNSSHSRESASAGDDPLGI) form a disordered region. Residues 63 to 95 (ENTIDKNIAKFKELLEKCDTLENHYEMLNQLAI) adopt a coiled-coil conformation.

This sequence belongs to the BLOC1S4 family. In terms of assembly, component of the biogenesis of lysosome-related organelles complex-1 (BLOC-1) composed of at least BLI1, BLS1, CNL1, KXD1, SNN1 and VAB2.

The protein resides in the cytoplasm. Its function is as follows. Component of the biogenesis of lysosome-related organelles complex-1 (BLOC-1), a complex that is involved in endosomal cargo sorting. The chain is Biogenesis of lysosome-related organelles complex 1 subunit CNL1 (CLN1) from Saccharomyces cerevisiae (strain Lalvin QA23) (Baker's yeast).